The sequence spans 854 residues: MKFLKNIKSLEFRLAESMLKSINDLKEKYLAFSDEELKNMTNVFKEKLKKNVSLESIRIDAFAVAREATFRVLKKRPYDVQMIGGLILDFGSVAEMKTGEGKTITSIAPVYLNALKGSGVIVSTVNEYLAERDAAEMGEVFKWLGLSVGLNKANMPSNLKRAAYKCDITYSVHSELGFDYLRDNMVNSFEEKVQRDLNFALIDEVDSILIDEAKTPLIISGGKSDEVSLYAVTDQFVRTLDHVDYAIDEETKAINLTAQGIEKTKKFFNFNSLYNLENSELIHRLQNALRAHKVMKKDVEYVVLNGKIELVDTFTGRIMEGRSYSEGLQQAIQAKELVEIDPETKTLATITYQNFFRLFKKLSGMTGTGKTEEQEFIDIYNMRVTEIPTNVPIARIDHPEKVYVTFQAKYKAVVEEIKRLHAKKQPILVGTSQVEESEYLHQLLLKENLPHTVLNAKQNKNEADIIAKAGIAGAITIATNMAGRGTDIKPDAESLKQGGLFVLGTDKSEARRIDNQLKGRSGRQGDVGESRFFISIDDQLIRRFSLQDKWKEIFAEYKDNEIIDKQIKKAFDKAQRKIEGFNYDNRKNVLNYDDVIRQQRDIIYSQRDSILLQDDLSLVVEKMIQRNSKQIIKYGELYTRTGALDHKALVNFVNKEYMNICDFKFTLEDFNNYINEEIPQHLSNILIREYRKMREFLVEKSGKLPTNLFERRAIISALDEKWQNHINLMDKLRQSVNLVQYSQKNPFQTYTEIGTKHFEQLVEDIATNSLKIIMNNPSAKFQNLDGDFKNEQIKLEDGSIITIPANIPFDIKEQIISKAKELLKESGEKRKVFEKNILSDLNLVDEKFRDSSKW.

ATP contacts are provided by residues Q81, 99–103 (GEGKT), and D487.

Belongs to the SecA family. In terms of assembly, monomer and homodimer. Part of the essential Sec protein translocation apparatus which comprises SecA, SecYEG and auxiliary proteins SecDF. Other proteins may also be involved.

The protein localises to the cell membrane. It is found in the cytoplasm. It carries out the reaction ATP + H2O + cellular proteinSide 1 = ADP + phosphate + cellular proteinSide 2.. Functionally, part of the Sec protein translocase complex. Interacts with the SecYEG preprotein conducting channel. Has a central role in coupling the hydrolysis of ATP to the transfer of proteins into and across the cell membrane, serving as an ATP-driven molecular motor driving the stepwise translocation of polypeptide chains across the membrane. The polypeptide is Protein translocase subunit SecA (Mycoplasma mobile (strain ATCC 43663 / 163K / NCTC 11711) (Mesomycoplasma mobile)).